Here is a 286-residue protein sequence, read N- to C-terminus: Nucleotide-binding protein PSPA7_5038 (286 aa).

Position 8 to 15 (8 to 15 (GRSGSGKS)) interacts with ATP. 60–63 (DARN) provides a ligand contact to GTP.

This sequence belongs to the RapZ-like family.

Functionally, displays ATPase and GTPase activities. This chain is Nucleotide-binding protein PSPA7_5038, found in Pseudomonas paraeruginosa (strain DSM 24068 / PA7) (Pseudomonas aeruginosa (strain PA7)).